The chain runs to 361 residues: Chorismate synthase (361 aa).

NADP(+) contacts are provided by arginine 48 and arginine 54. FMN contacts are provided by residues 125-127 (RSS), 238-239 (NA), glycine 278, 293-297 (KPTSS), and arginine 319.

This sequence belongs to the chorismate synthase family. In terms of assembly, homotetramer. FMNH2 serves as cofactor.

It catalyses the reaction 5-O-(1-carboxyvinyl)-3-phosphoshikimate = chorismate + phosphate. It functions in the pathway metabolic intermediate biosynthesis; chorismate biosynthesis; chorismate from D-erythrose 4-phosphate and phosphoenolpyruvate: step 7/7. Catalyzes the anti-1,4-elimination of the C-3 phosphate and the C-6 proR hydrogen from 5-enolpyruvylshikimate-3-phosphate (EPSP) to yield chorismate, which is the branch point compound that serves as the starting substrate for the three terminal pathways of aromatic amino acid biosynthesis. This reaction introduces a second double bond into the aromatic ring system. This chain is Chorismate synthase, found in Photorhabdus laumondii subsp. laumondii (strain DSM 15139 / CIP 105565 / TT01) (Photorhabdus luminescens subsp. laumondii).